The primary structure comprises 315 residues: Calcium homeostasis modulator protein 6 (315 aa).

Residues 1-21 are Cytoplasmic-facing; it reads MEKFRAVLDLHVKHHSALGYG. The chain crosses the membrane as a helical span at residues 22–37; sequence LVTLLTAGGERIFSAV. The Extracellular portion of the chain corresponds to 38–46; that stretch reads AFQCPCSAA. 3 disulfides stabilise this stretch: C41–C126, C43–C155, and C139–C146. Residues 47-68 form a helical membrane-spanning segment; it reads WNLPYGLVFLLVPALALFLLGY. The Cytoplasmic segment spans residues 69–102; it reads VLSARTWRLLTGCCSSARASCGSALRGSLVCTQI. Residues 103-127 traverse the membrane as a helical segment; sequence SAAAALAPLTWVAVALLGGAFYECA. Over 128–169 the chain is Extracellular; it reads ATGSAAFAQRLCLGRNRSCAAELPLVPCNQAKASDVQDLLKD. A helical transmembrane segment spans residues 170 to 192; that stretch reads LKAQSQVLGWILIAVVIIILLIF. The Cytoplasmic segment spans residues 193 to 315; that stretch reads TSVTRCLSPV…SSGINSTPEL (123 aa).

The protein belongs to the CALHM family. As to quaternary structure, oligomerizes to form decameric and undecameric channels. In terms of processing, N-glycosylated. In terms of tissue distribution, placenta.

It localises to the cell membrane. It catalyses the reaction ATP(in) = ATP(out). Pore-forming subunit of an ATP-permeable channel. In response to pathogen-derived and proinflammatory stimuli, relocates from intracellular compartments to NK-dendritic cell and NK-macrophage immune synapses where it mediates ATP efflux and NK cell activation involved in antimicrobial and antitumor responses. May assemble to form gap junction channel-like structures with gating and ion conductance likely regulated by membrane lipids and voltage rather than by extracellular calcium levels. The protein is Calcium homeostasis modulator protein 6 of Homo sapiens (Human).